Reading from the N-terminus, the 98-residue chain is DNA-binding protein Fis (98 aa).

The H-T-H motif DNA-binding region spans 74–93 (QTRAALMMGINRGTLRKKLK).

It belongs to the transcriptional regulatory Fis family. Homodimer.

Activates ribosomal RNA transcription. Plays a direct role in upstream activation of rRNA promoters. The protein is DNA-binding protein Fis of Photorhabdus laumondii subsp. laumondii (strain DSM 15139 / CIP 105565 / TT01) (Photorhabdus luminescens subsp. laumondii).